The chain runs to 122 residues: Ribosome-binding factor A (122 aa).

This sequence belongs to the RbfA family. As to quaternary structure, monomer. Binds 30S ribosomal subunits, but not 50S ribosomal subunits or 70S ribosomes.

The protein resides in the cytoplasm. Functionally, one of several proteins that assist in the late maturation steps of the functional core of the 30S ribosomal subunit. Associates with free 30S ribosomal subunits (but not with 30S subunits that are part of 70S ribosomes or polysomes). Required for efficient processing of 16S rRNA. May interact with the 5'-terminal helix region of 16S rRNA. The sequence is that of Ribosome-binding factor A from Dichelobacter nodosus (strain VCS1703A).